A 554-amino-acid polypeptide reads, in one-letter code: U4/U6 small nuclear ribonucleoprotein PRP4-like protein (554 aa).

Pro residues predominate over residues 48 to 65 (APIPMMPHPPVARPPTFR). Positions 48 to 99 (APIPMMPHPPVARPPTFRPPVSQNGGVKTSDSDSESDDEHIEISEESKQVRE) are disordered. The span at 88 to 99 (IEISEESKQVRE) shows a compositional bias: basic and acidic residues. WD repeat units follow at residues 253 to 292 (GDDRPLTGCSFSRDGKILATCSLSGVTKLWEMPQVTNTIA), 296 to 335 (DHKERATDVVFSPVDDCLATASADRTAKLWKTDGTLLQTF), 337 to 376 (GHLDRLARVAFHPSGKYLGTTSYDKTWRLWDINTGAELLL), 379 to 418 (GHSRSVYGIAFQQDGALAASCGLDSLARVWDLRTGRSILV), 421 to 460 (GHIKPVFSVNFSPNGYHLASGGEDNQCRIWDLRMRKSLYI), 463 to 503 (AHAN…LVKS), and 506 to 545 (GHESKVASLDITADSSCIATVSHDRTIKLWTSSGNDDEDE).

It is found in the nucleus speckle. In terms of biological role, participates in pre-mRNA splicing. Part of the U4/U5/U6 tri-snRNP complex, one of the building blocks of the spliceosome. Essential for reproduction. In female gametophyte, is necessary for the egg cell and central cell fate determination and hence reproductive success. Involved in a mechanism that prevents accessory cells from adopting gametic cell fate. Modulates egg cell signaling center that regulates the development of all female gametophytic cells. This chain is U4/U6 small nuclear ribonucleoprotein PRP4-like protein, found in Arabidopsis thaliana (Mouse-ear cress).